Reading from the N-terminus, the 98-residue chain is U10-barytoxin-Tl1a (98 aa).

A signal peptide spans 1-21 (MKTLVLVAVLGVASLYLLSSA). Positions 22–50 (SEVQQLSPAEEEFRAFVSTFGGLFETEER) are excised as a propeptide. 3 cysteine pairs are disulfide-bonded: cysteine 57–cysteine 71, cysteine 64–cysteine 76, and cysteine 70–cysteine 89.

It belongs to the neurotoxin 10 (Hwtx-1) family. 27 (ICK-3) subfamily. Expressed by the venom gland.

It localises to the secreted. Functionally, ion channel inhibitor. In Trittame loki (Brush-footed trapdoor spider), this protein is U10-barytoxin-Tl1a.